Reading from the N-terminus, the 631-residue chain is Protein FRIABLE 1 (631 aa).

Positions 1–13 are enriched in low complexity; it reads MSVGVPVNPSSSS. The interval 1–36 is disordered; it reads MSVGVPVNPSSSSQLPAAPTTTTRRRVADSQEDHSH. Over 1 to 120 the chain is Cytoplasmic; sequence MSVGVPVNPS…NMRSTTNLGR (120 aa). Over residues 26–36 the composition is skewed to basic and acidic residues; it reads RVADSQEDHSH. Residues 121-141 form a helical; Signal-anchor for type II membrane protein membrane-spanning segment; the sequence is FILTLLSILVVTFFLIVALSG. Topologically, residues 142–631 are lumenal; it reads GVGRRRKHVE…RPSLRAQSLR (490 aa). 3 N-linked (GlcNAc...) asparagine glycosylation sites follow: Asn246, Asn329, and Asn364. Residue 384-386 participates in substrate binding; the sequence is HLR. N-linked (GlcNAc...) asparagine glycosylation is found at Asn398 and Asn425.

Belongs to the glycosyltransferase GT106 family. Ubiquitous. Strong expression in young seedlings, particularly at the junction between hypocotyl and root, in emerging cotyledons, and in parts of the roots. Also detected in the inflorescence (sepals, petals, mature pollen and siliques) and rosette leaves.

Its subcellular location is the golgi apparatus membrane. The protein operates within glycan metabolism. Functionally, glycosyltransferase required for normal cell adhesion and cell wall integrity. The polypeptide is Protein FRIABLE 1 (Arabidopsis thaliana (Mouse-ear cress)).